The sequence spans 476 residues: Stromelysin-2 (476 aa).

The N-terminal stretch at 1-17 (MEPLAILALLSLPICSA) is a signal peptide. A propeptide spans 18–99 (YPLHGAVTQG…PRCGVPDVGG (82 aa)) (activation peptide). Positions 90 to 97 (PRCGVPDV) match the Cysteine switch motif. The Zn(2+) site is built by Cys92, His168, Asp170, His183, His196, and His218. Glu219 is a catalytic residue. Residues His222 and His228 each coordinate Zn(2+). 4 Hemopexin repeats span residues 286–335 (PDKC…WPTL), 336–382 (PSDL…GFPP), 384–432 (VKKI…FPGI), and 433–476 (EPQV…WLLC). Cys289 and Cys476 are joined by a disulfide.

The protein belongs to the peptidase M10A family. Zn(2+) serves as cofactor. The cofactor is Ca(2+). Expressed in small intestine. Weak levels in heart and lung.

The protein resides in the secreted. The protein localises to the extracellular space. It localises to the extracellular matrix. It catalyses the reaction Similar to stromelysin 1, but action on collagen types III, IV and V is weak.. In terms of biological role, can degrade fibronectin, gelatins of type I, III, IV, and V; weakly collagens III, IV, and V. Activates procollagenase. This Mus musculus (Mouse) protein is Stromelysin-2 (Mmp10).